A 286-amino-acid chain; its full sequence is Thiamine-monophosphate kinase (286 aa).

Asp-22, Ser-36, Thr-37, and Asp-38 together coordinate Mg(2+). Substrate is bound at residue Asp-45. Mg(2+)-binding residues include Asp-66 and Asp-111. ATP-binding positions include 110–111 and Arg-136; that span reads GD. Asp-191 serves as a coordination point for Mg(2+). Ser-193 provides a ligand contact to ATP. Asp-194 provides a ligand contact to Mg(2+). Position 282 (Tyr-282) interacts with substrate.

Belongs to the thiamine-monophosphate kinase family.

It carries out the reaction thiamine phosphate + ATP = thiamine diphosphate + ADP. It functions in the pathway cofactor biosynthesis; thiamine diphosphate biosynthesis; thiamine diphosphate from thiamine phosphate: step 1/1. In terms of biological role, catalyzes the ATP-dependent phosphorylation of thiamine-monophosphate (TMP) to form thiamine-pyrophosphate (TPP), the active form of vitamin B1. In Methanospirillum hungatei JF-1 (strain ATCC 27890 / DSM 864 / NBRC 100397 / JF-1), this protein is Thiamine-monophosphate kinase.